Reading from the N-terminus, the 520-residue chain is Glucose-1-phosphate adenylyltransferase small subunit, chloroplastic (520 aa).

The transit peptide at 1 to 71 directs the protein to the chloroplast; the sequence is MASVSAIGVL…RNPIIVSPKA (71 aa).

Belongs to the bacterial/plant glucose-1-phosphate adenylyltransferase family. Heterotetramer. In terms of tissue distribution, leaves.

It is found in the plastid. Its subcellular location is the chloroplast. It catalyses the reaction alpha-D-glucose 1-phosphate + ATP + H(+) = ADP-alpha-D-glucose + diphosphate. It participates in glycan biosynthesis; starch biosynthesis. Activated by 3'phosphoglycerate, inhibited by orthophosphate. Allosteric regulation. In terms of biological role, this protein plays a role in synthesis of starch. It catalyzes the synthesis of the activated glycosyl donor, ADP-glucose from Glc-1-P and ATP. In Arabidopsis thaliana (Mouse-ear cress), this protein is Glucose-1-phosphate adenylyltransferase small subunit, chloroplastic (APS1).